The primary structure comprises 159 residues: Endoribonuclease YbeY (159 aa).

Residues His125, His129, and His135 each coordinate Zn(2+).

The protein belongs to the endoribonuclease YbeY family. The cofactor is Zn(2+).

It localises to the cytoplasm. Its function is as follows. Single strand-specific metallo-endoribonuclease involved in late-stage 70S ribosome quality control and in maturation of the 3' terminus of the 16S rRNA. The chain is Endoribonuclease YbeY from Enterococcus faecalis (strain ATCC 700802 / V583).